Consider the following 232-residue polypeptide: Large ribosomal subunit protein uL1 (232 aa).

It belongs to the universal ribosomal protein uL1 family. As to quaternary structure, part of the 50S ribosomal subunit.

Its function is as follows. Binds directly to 23S rRNA. The L1 stalk is quite mobile in the ribosome, and is involved in E site tRNA release. In terms of biological role, protein L1 is also a translational repressor protein, it controls the translation of the L11 operon by binding to its mRNA. The protein is Large ribosomal subunit protein uL1 of Xylella fastidiosa (strain M23).